Reading from the N-terminus, the 511-residue chain is uncharacterized protein (511 aa).

3 helical membrane-spanning segments follow: residues 33–53 (IICMIIAYVFILPAGIVLAMA), 59–79 (IPVQIVYVILTLIGYIFAHIS), and 97–117 (VGRFFMWITFLIAIVGITTSI). A phosphoserine mark is found at Ser-147, Ser-161, and Ser-162. Residues 157 to 180 (REGNSSDEYLPPQSSRRDVSSEKP) are disordered. Helical transmembrane passes span 216-236 (LWLYVGFFESCTGIVLLAGIF), 249-269 (IKGAIFLWYGILSFGEYLGAF), 297-317 (MVESFLLFAYGVSNVWLEHLG), 332-352 (SLAFMLWWAGLCGILVESKVV), 412-432 (VLWGRLLAAAAIARICTYIML), 449-469 (IITSFCLICGGAMFMASSYDV), and 483-503 (IMNISVAFTCIVMGLEVMFLI).

This sequence to yeast YCR061W.

It is found in the endoplasmic reticulum membrane. This is an uncharacterized protein from Schizosaccharomyces pombe (strain 972 / ATCC 24843) (Fission yeast).